The primary structure comprises 463 residues: Peptidase inhibitor 16 (463 aa).

The first 27 residues, 1 to 27 (MHGSCSFLMLLLPLLLLLVATTGPVGA), serve as a signal peptide directing secretion. One can recognise an SCP domain in the interval 37 to 165 (VELHNLYRAQ…TNIELLVCNY (129 aa)). Residue Asn114 is glycosylated (N-linked (GlcNAc...) asparagine). Disordered stretches follow at residues 262–281 (TQAPTSLATKDPPSMATEAP), 303–341 (EPVTFPKSTHVPIPKSADKVTDKTKVPSRSPENSLDPKM), and 383–408 (LQATLDHTGHTSSKSLPNFPNTSATA). The segment covering 318-327 (SADKVTDKTK) has biased composition (basic and acidic residues). The O-glycosylated at one site stretch occupies residues 386 to 395 (TLDHTGHTSS). A compositionally biased stretch (polar residues) spans 392-408 (HTSSKSLPNFPNTSATA). N-linked (GlcNAc...) asparagine glycans are attached at residues Asn403 and Asn409.

The protein belongs to the CRISP family. In terms of assembly, interacts with PSP94/MSMB. N- and O-glycosylated. O-glycosylated with core 1 or possibly core 8 glycans. In terms of tissue distribution, expressed in prostate, testis, ovary and intestine. Concentrates in prostate cancer patient's sera.

It localises to the secreted. Its function is as follows. May inhibit cardiomyocyte growth. This chain is Peptidase inhibitor 16 (PI16), found in Homo sapiens (Human).